A 336-amino-acid polypeptide reads, in one-letter code: tRNA N6-adenosine threonylcarbamoyltransferase (336 aa).

Fe cation-binding residues include His111 and His115. Substrate is bound by residues 133 to 137 (LISGG), Asp166, Gly179, and Asn276. Asp301 contacts Fe cation.

This sequence belongs to the KAE1 / TsaD family. Fe(2+) is required as a cofactor.

It is found in the cytoplasm. The catalysed reaction is L-threonylcarbamoyladenylate + adenosine(37) in tRNA = N(6)-L-threonylcarbamoyladenosine(37) in tRNA + AMP + H(+). Functionally, required for the formation of a threonylcarbamoyl group on adenosine at position 37 (t(6)A37) in tRNAs that read codons beginning with adenine. Is involved in the transfer of the threonylcarbamoyl moiety of threonylcarbamoyl-AMP (TC-AMP) to the N6 group of A37, together with TsaE and TsaB. TsaD likely plays a direct catalytic role in this reaction. The protein is tRNA N6-adenosine threonylcarbamoyltransferase of Wolbachia pipientis subsp. Culex pipiens (strain wPip).